Reading from the N-terminus, the 545-residue chain is Baeyer-Villiger monooxygenase (545 aa).

FAD is bound by residues Phe-24, Asp-45, Trp-54, Asp-65, Tyr-71, and Val-118.

Belongs to the FAD-binding monooxygenase family. The cofactor is FAD.

Catalyzes a Baeyer-Villiger oxidation reaction, i.e. the insertion of an oxygen atom into a carbon-carbon bond adjacent to a carbonyl, which converts ketones to esters or lactones using NADPH as an electron donor. Besides cycloalkanones, can use cyclic alpha,beta-unsaturated ketones as substrates, leading to conjugated ene-lactones. Can also act on methylated cycloalkanones and methylated cycloalkenones with high enantioselectivity in some cases. This chain is Baeyer-Villiger monooxygenase, found in Pseudooceanicola batsensis (strain ATCC BAA-863 / DSM 15984 / KCTC 12145 / HTCC2597) (Oceanicola batsensis).